The primary structure comprises 293 residues: 33 kDa chaperonin (293 aa).

2 cysteine pairs are disulfide-bonded: Cys-237-Cys-239 and Cys-271-Cys-274.

This sequence belongs to the HSP33 family. In terms of processing, under oxidizing conditions two disulfide bonds are formed involving the reactive cysteines. Under reducing conditions zinc is bound to the reactive cysteines and the protein is inactive.

Its subcellular location is the cytoplasm. Its function is as follows. Redox regulated molecular chaperone. Protects both thermally unfolding and oxidatively damaged proteins from irreversible aggregation. Plays an important role in the bacterial defense system toward oxidative stress. The sequence is that of 33 kDa chaperonin from Haemophilus influenzae (strain ATCC 51907 / DSM 11121 / KW20 / Rd).